The chain runs to 287 residues: Probable aquaporin PIP1-4 (287 aa).

N-acetylmethionine is present on Met-1. The interval Met-1–Pro-36 is disordered. Residues Met-1 to Gly-55 are Cytoplasmic-facing. Residues Ile-56–Val-76 traverse the membrane as a helical segment. Over Lys-77–Ala-92 the chain is Extracellular. The helical transmembrane segment at Trp-93–His-113 threads the bilayer. Residues Ile-114 to Ala-133 are Cytoplasmic-facing. Residues Asn-115–Ala-117 carry the NPA 1 motif. The chain crosses the membrane as a helical span at residues Val-134–Phe-154. Topologically, residues Gln-155–Lys-175 are extracellular. The chain crosses the membrane as a helical span at residues Gly-176–Ala-196. The Cytoplasmic segment spans residues Thr-197–Pro-209. A helical membrane pass occupies residues Ile-210 to Ile-230. The Extracellular segment spans residues Thr-231–Trp-257. The NPA 2 motif lies at Asn-236–Ala-238. A helical membrane pass occupies residues Ile-258–Ile-278. The Cytoplasmic segment spans residues Arg-279 to Ser-287. Ser-285 is subject to Phosphoserine.

It belongs to the MIP/aquaporin (TC 1.A.8) family. PIP (TC 1.A.8.11) subfamily. Predominantly expressed in roots and green siliques. Also expressed above ground and in flower buds.

The protein localises to the cell membrane. Its function is as follows. Aquaporins facilitate the transport of water and small neutral solutes across cell membranes. The chain is Probable aquaporin PIP1-4 (PIP1.4) from Arabidopsis thaliana (Mouse-ear cress).